Reading from the N-terminus, the 108-residue chain is Urease subunit beta (108 aa).

This sequence belongs to the urease beta subunit family. As to quaternary structure, heterotrimer of UreA (gamma), UreB (beta) and UreC (alpha) subunits. Three heterotrimers associate to form the active enzyme.

The protein localises to the cytoplasm. The catalysed reaction is urea + 2 H2O + H(+) = hydrogencarbonate + 2 NH4(+). It functions in the pathway nitrogen metabolism; urea degradation; CO(2) and NH(3) from urea (urease route): step 1/1. This Microcystis aeruginosa (strain NIES-843 / IAM M-2473) protein is Urease subunit beta.